A 564-amino-acid chain; its full sequence is Hexose transporter HXT13 (564 aa).

The Cytoplasmic segment spans residues 1–52 (MSSAQSSIDSDGDVRDADIHVAPPVEKEWSDGFDDNEVINGDNVEPPKRGLI). Residues 53–73 (GYLVIYLLCYPISFGGFLPGW) traverse the membrane as a helical segment. Residues 74-109 (DSGITAGFINMDNFKMNFGSYKHSTGEYYLSNVRMG) lie on the Extracellular side of the membrane. The chain crosses the membrane as a helical span at residues 110-130 (LLVAMFSIGCAIGGLIFARLA). Topologically, residues 131 to 136 (DTLGRR) are cytoplasmic. Residues 137 to 157 (LAIVIVVLVYMVGAIIQISSN) traverse the membrane as a helical segment. Residues 158–167 (HKWYQYFVGK) are Extracellular-facing. A helical membrane pass occupies residues 168–188 (IIYGLGAGGCSVLCPMLLSEI). At 189 to 194 (APTDLR) the chain is on the cytoplasmic side. The chain crosses the membrane as a helical span at residues 195-215 (GGLVSLYQLNMTFGIFLGYCS). Over 216-229 (VYGTRKYDNTAQWR) the chain is Extracellular. Residues 230 to 250 (VPLGLCFLWALIIIIGMLLVP) traverse the membrane as a helical segment. The Cytoplasmic portion of the chain corresponds to 251 to 333 (ESPRYLIECE…VQTFLQLTGE (83 aa)). Residues 334 to 350 (NYFFFYGTTIFKSVGLT) form a helical membrane-spanning segment. The Extracellular portion of the chain corresponds to 351 to 356 (DGFETS). A helical transmembrane segment spans residues 357–374 (IVLGTVNFFSTIIAVMVV). Residues 375-381 (DKIGRRK) are Cytoplasmic-facing. Residues 382-402 (CLLFGAAGMMACMVIFASIGV) traverse the membrane as a helical segment. The Extracellular segment spans residues 403–424 (KCLYPHGQDGPSSKGAGNAMIV). A helical transmembrane segment spans residues 425-445 (FTCFYIFCFATTWAPVAYIVV). Residues 446–462 (AESFPSKVKSRAMSIST) are Cytoplasmic-facing. Residues 463-483 (ACNWLWQFLIGFFTPFITGSI) form a helical membrane-spanning segment. Residue H484 is a topological domain, extracellular. Residues 485–505 (FYYGYVFVGCLVAMFLYVFFF) traverse the membrane as a helical segment. Over 506–564 (LPETIGLSLEEIQLLYEEGIKPWKSASWVPPSRRGISSEESKTEKKDWKKFLKFSKNSD) the chain is Cytoplasmic. A disordered region spans residues 530–551 (SASWVPPSRRGISSEESKTEKK). The span at 541–551 (ISSEESKTEKK) shows a compositional bias: basic and acidic residues.

Belongs to the major facilitator superfamily. Sugar transporter (TC 2.A.1.1) family.

It localises to the membrane. In terms of biological role, probable glucose transporter. In Saccharomyces cerevisiae (strain ATCC 204508 / S288c) (Baker's yeast), this protein is Hexose transporter HXT13 (HXT13).